Here is a 3393-residue protein sequence, read N- to C-terminus: Genome polyprotein (3393 aa).

Residues 1 to 91 (MVNPKGVNVM…GVSRRKKRRS (91 aa)) lie on the Cytoplasmic side of the membrane. The tract at residues 28-60 (VSRGLRGFVLFVLTQLFMGRKLTPNVRRLWKSS) is hydrophobic; homodimerization of capsid protein C. Positions 91-108 (SATTSGTVFMAMLGLTLA) are cleaved as a propeptide — ER anchor for the capsid protein C, removed in mature form by serine protease NS3. A helical transmembrane segment spans residues 92–112 (ATTSGTVFMAMLGLTLAASVA). Over 113–231 (RHAHHTLINI…FETQVQKVEK (119 aa)) the chain is Extracellular. Asn-121 and Asn-137 each carry an N-linked (GlcNAc...) asparagine; by host glycan. A helical transmembrane segment spans residues 232–252 (WIIRNPTYAIAAILMSWYIGN). At 253 to 257 (SLKQR) the chain is on the cytoplasmic side. Residues 258 to 272 (VVLLLLTLALGPAYA) traverse the membrane as a helical segment. The Extracellular segment spans residues 273–713 (THCVGIPKRD…IHTVFGTAFH (441 aa)). Cystine bridges form between Cys-275–Cys-302, Cys-346–Cys-377, Cys-364–Cys-388, Cys-453–Cys-553, and Cys-570–Cys-600. Positions 370–383 (DRGWGNGCGLFGKG) are fusion peptide. A helical transmembrane segment spans residues 714–734 (GIFGGLSWMTRILIGVLLVWL). The Cytoplasmic segment spans residues 735–745 (GLNSRNGTATT). Residues 746-763 (LMMLTGFIILFLSLGVGA) traverse the membrane as a helical segment. Over 764 to 1112 (EVGCSVNWGQ…TPEKHLVRSW (349 aa)) the chain is Extracellular. 8 disulfide bridges follow: Cys-767–Cys-778, Cys-818–Cys-905, Cys-941–Cys-986, Cys-1043–Cys-1092, Cys-1054–Cys-1075, Cys-1054–Cys-1076, Cys-1075–Cys-1079, and Cys-1076–Cys-1079. 2 N-linked (GlcNAc...) asparagine; by host glycosylation sites follow: Asn-893 and Asn-970. A helical transmembrane segment spans residues 1113–1133 (VTAGDSYPAWSIGLVAMFLFV). The Cytoplasmic segment spans residues 1134-1186 (DIMARSRPTRKMMIGGTMLLLAIMIMGELSYLDLLRYIIVVGEHFIERENGGD). Residues 1187 to 1207 (VAYMAIMAASHLRPGLMAMVF) form a helical membrane-spanning segment. The Lumenal segment spans residues 1208-1283 (AKSMWSPKQR…PVSMPVIRKA (76 aa)). A helical membrane pass occupies residues 1284–1304 (SMIIGTGGLLLSLWKGGGSSM). Over 1305–1341 (RKGLPLFAASAARVLGLTKAHLSVLFILLITKNGKRT) the chain is Cytoplasmic. The chain crosses the membrane as a helical span at residues 1342–1362 (WPISECLAAVGIFGAAFGTMF). Residues 1363-1365 (SED) lie on the Lumenal side of the membrane. The helical transmembrane segment at 1366-1386 (ETLLGPLALVGVVLIVYTMFT) threads the bilayer. The Cytoplasmic segment spans residues 1387–1438 (QSDGLELVKAADISWSDEAVVSGEARRFDVALNDSGEFKLLDEPPVSWLNVS). The interval 1393–1432 (LVKAADISWSDEAVVSGEARRFDVALNDSGEFKLLDEPPV) is interacts with and activates NS3 protease. Residues 1439–1459 (FLVVAIVASSLHPIALVVTLV) constitute an intramembrane region (helical). Residues 1460–2137 (AWTYWRTEKR…KLALQQAPEA (678 aa)) lie on the Cytoplasmic side of the membrane. Positions 1470–1649 (SGVLWDVPLA…QPGSVAEVET (180 aa)) constitute a Peptidase S7 domain. Catalysis depends on charge relay system; for serine protease NS3 activity residues His-1521, Asp-1545, and Ser-1606. The region spanning 1653–1809 (DKMLRKGEFT…ESNAEIEDVK (157 aa)) is the Helicase ATP-binding domain. An important for RNA-binding region spans residues 1657 to 1660 (RKGE). An ATP-binding site is contributed by 1666-1673 (YHPGAGKT). The DEAH box motif lies at 1757–1760 (DEAH). Residues 1804–1984 (EIEDVKKEIP…VAPLYEEEAS (181 aa)) form the Helicase C-terminal domain. A helical membrane pass occupies residues 2138-2158 (VSTLLLLGMMAICTLGLVILL). Residues 2159–2168 (MKPKATDKMS) lie on the Lumenal side of the membrane. Positions 2169–2184 (MAMVTMAITGYLLKLG) form an intramembrane region, helical. Residue Gly-2185 is a topological domain, lumenal. Residues 2186–2206 (MTHAQVGGILLVFFIMMVVII) traverse the membrane as a helical segment. The Cytoplasmic segment spans residues 2207–2221 (PESGTQRSINDNKLA). A helical membrane pass occupies residues 2222–2236 (YVIILVGLVIGGVAC). Over 2237–2275 (NELGWLEKTKADLFGNNMTHAQTVVLPTINWNWLDFRPG) the chain is Lumenal. Residues 2276–2296 (AAWSLYVGMATFLTPVFVHWI) constitute an intramembrane region (helical). Topologically, residues 2297-2344 (KNEYGNASLTGITPTAGILGALNQGVPFVKLNTSVGVLLLSVWNNFTT) are lumenal. A helical transmembrane segment spans residues 2345–2365 (SSMLAAMVMLACHCLFVLPGV). Topologically, residues 2366–2408 (RAQCLREAQIRVFHGVAKNPMVDGNPTVDLEKENDMPDLYEKK) are cytoplasmic. The helical transmembrane segment at 2409 to 2429 (LALVALGMAAVLNAAMVRTAL) threads the bilayer. The Lumenal segment spans residues 2430–2457 (TTAEMVVLGSAAVGPLLEGNTSAFWNGP). A helical transmembrane segment spans residues 2458–2478 (LAVAVAGVMRGNHYALIGIVY). The Cytoplasmic segment spans residues 2479–3393 (NLWLLKTARR…QRCSAYGELL (915 aa)). An mRNA cap 0-1 NS5-type MT domain is found at 2489 to 2753 (GGSSALTYGE…DLIYPTGTRS (265 aa)). Ser-2544 is a binding site for S-adenosyl-L-methionine. Residue Ser-2544 is modified to Phosphoserine. Lys-2549 (for 2'-O-MTase activity) is an active-site residue. S-adenosyl-L-methionine contacts are provided by Gly-2574, Trp-2575, Thr-2592, Leu-2593, Asp-2619, and Ile-2620. Catalysis depends on Asp-2634, which acts as the For 2'-O-MTase activity. Ile-2635 contributes to the S-adenosyl-L-methionine binding site. Residues Lys-2670 and Glu-2706 each act as for 2'-O-MTase activity in the active site. Tyr-2708 is a binding site for S-adenosyl-L-methionine. A Nuclear localization signal motif is present at residues 2860–2893 (REIMKVVNQWLFDYLGRTKQPRICTKEEFINKVR). Residues Glu-2927, His-2931, Cys-2936, and Cys-2939 each coordinate Zn(2+). A RdRp catalytic domain is found at 3017 to 3169 (GLVYADDTAG…APVDESFAGA (153 aa)). His-3204, Cys-3220, and Cys-3339 together coordinate Zn(2+).

The protein in the N-terminal section; belongs to the class I-like SAM-binding methyltransferase superfamily. mRNA cap 0-1 NS5-type methyltransferase family. In terms of assembly, homodimer. Interacts (via N-terminus) with host EXOC1 (via C-terminus); this interaction results in EXOC1 degradation through the proteasome degradation pathway. Forms heterodimers with envelope protein E in the endoplasmic reticulum and Golgi. As to quaternary structure, homodimer; in the endoplasmic reticulum and Golgi. Interacts with protein prM. Interacts with non-structural protein 1. In terms of assembly, homodimer; Homohexamer when secreted. Interacts with envelope protein E. Interacts (via N-terminus) with serine protease NS3. As to quaternary structure, forms a heterodimer with serine protease NS3. May form homooligomers. In terms of assembly, forms a heterodimer with NS2B. Interacts with non-structural protein 2A (via N-terminus). Interacts with NS4B. Interacts with unphosphorylated RNA-directed RNA polymerase NS5; this interaction stimulates RNA-directed RNA polymerase NS5 guanylyltransferase activity. NS3 interacts with host PDCD6IP; this interaction contributes to virion release. Interacts with serine protease NS3. As to quaternary structure, homodimer. Interacts with host STAT2; this interaction prevents the establishment of cellular antiviral state. Interacts with host TRIM23; this interaction leads to NS5 ubiquitination. In terms of processing, specific enzymatic cleavages in vivo yield mature proteins. The nascent capsid protein C contains a C-terminal hydrophobic domain that act as a signal sequence for translocation of prM into the lumen of the ER. Mature capsid protein C is cleaved at a site upstream of this hydrophobic domain by NS3. prM is cleaved in post-Golgi vesicles by a host furin, releasing the mature small envelope protein M, and peptide pr. Non-structural protein 2A-alpha, a C-terminally truncated form of non-structural protein 2A, results from partial cleavage by NS3. Specific enzymatic cleavages in vivo yield mature proteins peptide 2K acts as a signal sequence and is removed from the N-terminus of NS4B by the host signal peptidase in the ER lumen. Signal cleavage at the 2K-4B site requires a prior NS3 protease-mediated cleavage at the 4A-2K site. Post-translationally, cleaved in post-Golgi vesicles by a host furin, releasing the mature small envelope protein M, and peptide pr. This cleavage is incomplete as up to 30% of viral particles still carry uncleaved prM. N-glycosylated. In terms of processing, N-glycosylated. The excreted form is glycosylated and this is required for efficient secretion of the protein from infected cells. Post-translationally, polyubiquitinated; ubiquitination is probably mediated by host TRIM23 and is prerequisite for NS5-STAT2 interaction. NS5 is not ISGylated or sumoylated. Phosphorylated on serines residues. This phosphorylation may trigger NS5 nuclear localization.

The protein localises to the virion. It localises to the host nucleus. Its subcellular location is the host cytoplasm. It is found in the host perinuclear region. The protein resides in the secreted. The protein localises to the virion membrane. It localises to the host endoplasmic reticulum membrane. It catalyses the reaction Selective hydrolysis of -Xaa-Xaa-|-Yaa- bonds in which each of the Xaa can be either Arg or Lys and Yaa can be either Ser or Ala.. It carries out the reaction RNA(n) + a ribonucleoside 5'-triphosphate = RNA(n+1) + diphosphate. The catalysed reaction is a ribonucleoside 5'-triphosphate + H2O = a ribonucleoside 5'-diphosphate + phosphate + H(+). The enzyme catalyses ATP + H2O = ADP + phosphate + H(+). It catalyses the reaction a 5'-end (5'-triphosphoguanosine)-ribonucleoside in mRNA + S-adenosyl-L-methionine = a 5'-end (N(7)-methyl 5'-triphosphoguanosine)-ribonucleoside in mRNA + S-adenosyl-L-homocysteine. It carries out the reaction a 5'-end (N(7)-methyl 5'-triphosphoguanosine)-ribonucleoside in mRNA + S-adenosyl-L-methionine = a 5'-end (N(7)-methyl 5'-triphosphoguanosine)-(2'-O-methyl-ribonucleoside) in mRNA + S-adenosyl-L-homocysteine + H(+). Plays a role in virus budding by binding to the cell membrane and gathering the viral RNA into a nucleocapsid that forms the core of a mature virus particle. During virus entry, may induce genome penetration into the host cytoplasm after hemifusion induced by the surface proteins. Can migrate to the cell nucleus where it modulates host functions. Its function is as follows. Inhibits RNA silencing by interfering with host Dicer. Functionally, prevents premature fusion activity of envelope proteins in trans-Golgi by binding to envelope protein E at pH6.0. After virion release in extracellular space, gets dissociated from E dimers. In terms of biological role, acts as a chaperone for envelope protein E during intracellular virion assembly by masking and inactivating envelope protein E fusion peptide. prM is the only viral peptide matured by host furin in the trans-Golgi network probably to avoid catastrophic activation of the viral fusion activity in acidic Golgi compartment prior to virion release. prM-E cleavage is inefficient, and many virions are only partially matured. These uncleaved prM would play a role in immune evasion. May play a role in virus budding. Exerts cytotoxic effects by activating a mitochondrial apoptotic pathway through M ectodomain. May display a viroporin activity. Its function is as follows. Binds to host cell surface receptor and mediates fusion between viral and cellular membranes. Envelope protein is synthesized in the endoplasmic reticulum in the form of heterodimer with protein prM. They play a role in virion budding in the ER, and the newly formed immature particle is covered with 60 spikes composed of heterodimer between precursor prM and envelope protein E. The virion is transported to the Golgi apparatus where the low pH causes dissociation of PrM-E heterodimers and formation of E homodimers. prM-E cleavage is inefficient, and many virions are only partially matured. These uncleaved prM would play a role in immune evasion. Functionally, involved in immune evasion, pathogenesis and viral replication. Once cleaved off the polyprotein, is targeted to three destinations: the viral replication cycle, the plasma membrane and the extracellular compartment. Essential for viral replication. Required for formation of the replication complex and recruitment of other non-structural proteins to the ER-derived membrane structures. Excreted as a hexameric lipoparticle that plays a role against host immune response. Antagonizing the complement function. Binds to the host macrophages and dendritic cells. Inhibits signal transduction originating from Toll-like receptor 3 (TLR3). In terms of biological role, component of the viral RNA replication complex that functions in virion assembly and antagonizes the host immune response. Required cofactor for the serine protease function of NS3. May have membrane-destabilizing activity and form viroporins. Its function is as follows. Displays three enzymatic activities: serine protease, NTPase and RNA helicase. NS3 serine protease, in association with NS2B, performs its autocleavage and cleaves the polyprotein at dibasic sites in the cytoplasm: C-prM, NS2A-NS2B, NS2B-NS3, NS3-NS4A, NS4A-2K and NS4B-NS5. NS3 RNA helicase binds RNA and unwinds dsRNA in the 3' to 5' direction. Also plays a role in virus assembly. Functionally, regulates the ATPase activity of the NS3 helicase activity. NS4A allows NS3 helicase to conserve energy during unwinding. In terms of biological role, functions as a signal peptide for NS4B and is required for the interferon antagonism activity of the latter. Induces the formation of ER-derived membrane vesicles where the viral replication takes place. Inhibits interferon (IFN)-induced host STAT1 phosphorylation and nuclear translocation, thereby preventing the establishment of cellular antiviral state by blocking the IFN-alpha/beta pathway. Its function is as follows. Replicates the viral (+) and (-) RNA genome, and performs the capping of genomes in the cytoplasm. NS5 methylates viral RNA cap at guanine N-7 and ribose 2'-O positions. Besides its role in RNA genome replication, also prevents the establishment of cellular antiviral state by blocking the interferon-alpha/beta (IFN-alpha/beta) signaling pathway. IFN-I induces binding of NS5 to host IFN-activated transcription factor STAT2, preventing its transcriptional activity. Host TRIM23 is the E3 ligase that interacts with and polyubiquitinates NS5 to promote its binding to STAT2 and trigger IFN-I signaling inhibition. This Banzi virus (BANV) protein is Genome polyprotein.